Consider the following 137-residue polypeptide: Small ribosomal subunit protein uS12 (137 aa).

At aspartate 89 the chain carries 3-methylthioaspartic acid. The interval 101 to 137 (SLDTSGVADRKQSRSKYGAKQPKAGAPAAPVKGKGKK) is disordered. The segment covering 116–137 (KYGAKQPKAGAPAAPVKGKGKK) has biased composition (low complexity).

The protein belongs to the universal ribosomal protein uS12 family. As to quaternary structure, part of the 30S ribosomal subunit. Contacts proteins S8 and S17. May interact with IF1 in the 30S initiation complex.

With S4 and S5 plays an important role in translational accuracy. Functionally, interacts with and stabilizes bases of the 16S rRNA that are involved in tRNA selection in the A site and with the mRNA backbone. Located at the interface of the 30S and 50S subunits, it traverses the body of the 30S subunit contacting proteins on the other side and probably holding the rRNA structure together. The combined cluster of proteins S8, S12 and S17 appears to hold together the shoulder and platform of the 30S subunit. This is Small ribosomal subunit protein uS12 from Chlorobium chlorochromatii (strain CaD3).